Reading from the N-terminus, the 1370-residue chain is Major capsid protein (1370 aa).

It belongs to the herpesviridae major capsid protein family. Homomultimer. Makes the hexons and eleven out of twelve pentons. Interacts with triplex proteins 1/TRX1 and 2/TRX2; adjacent capsomers are linked together in groups of three by triplexes, heterotrimeric complexes composed of one molecule of TRX1 and two molecules of TRX2. Interacts with scaffold protein; this interaction allows efficient MCP transport to the host nucleus. Interacts with capsid vertex component 2/CVC2. Interacts with the small capsomere-interacting protein/SCP.

The protein resides in the virion. It is found in the host nucleus. Its function is as follows. Self-assembles to form an icosahedral capsid with a T=16 symmetry, about 200 nm in diameter, and consisting of 150 hexons and 12 pentons (total of 162 capsomers). Hexons form the edges and faces of the capsid and are each composed of six MCP molecules. In contrast, one penton is found at each of the 12 vertices. Eleven of the pentons are MCP pentamers, while the last vertex is occupied by the portal complex. The capsid is surrounded by a layer of proteinaceous material designated the tegument which, in turn, is enclosed in an envelope of host cell-derived lipids containing virus-encoded glycoproteins. This chain is Major capsid protein, found in Human cytomegalovirus (strain AD169) (HHV-5).